The following is a 299-amino-acid chain: YjeF N-terminal domain-containing protein 3 (299 aa).

The 214-residue stretch at 74–287 (AAALERELLE…DVRRKFALRL (214 aa)) folds into the YjeF N-terminal domain.

Interacts with APOA1. Binds to HDL. Expressed in theca cells in ovary and in Leydig cells in testis (at protein level). Also expressed in brain and mammary gland.

Functionally, may accelerate cholesterol efflux from endothelial cells to high-density lipoprotein (HDL) and thereby regulates angiogenesis. May orchestrate hematopoietic stem and progenitor cell emergence from the hemogenic endothelium, a type of specialized endothelium manifesting hematopoietic potential. YJEFN3-mediated cholesterol efflux activates endothelial SREBF2, the master transcription factor for cholesterol biosynthesis, which in turn transactivates NOTCH and promotes hematopoietic stem and progenitor cell emergence. May play a role in spermiogenesis and oogenesis. The protein is YjeF N-terminal domain-containing protein 3 (YJEFN3) of Homo sapiens (Human).